Consider the following 451-residue polypeptide: MLEIIILAAGKGTRMRSDKPKVLHTLAGKPFLEHVLDRSAELNADKVHVIIGHGADMVREALAGRDVNFVEQTEQLGTGHAVLQVLPHLNPESDTLILYGDVPLTKTDTLAELRAKVSDSSMGLLTVNLADPNGYGRIVRTNGSVTAIVEQKDANPEQLKIDEVNTGVMAVKSAHLAKWLPALSNDNAQGEYYLTDIIAMSSADDIAIETAQPKDEYEVLGVNNRLQQAELERIFQRQVAEELMVAGATLLDPARLDCRGSIEVGRDCVIDVNCVFEGKVVLGNNVHIGPNCVISDSTIGDGTVILANSILEESTLAENCNIGPFARLRPGSQLASKAKIGNFVETKKAVIGEGSKVNHLSYVGDAEIGAGVNIGAGTITCNYDGVNKSKTTIEDGAFIGSNSALVAPVTVGKNATVGAGSIVTKNSEEGDLIIARAKQSNIKGWARPVKK.

The pyrophosphorylase stretch occupies residues Met-1–Arg-225. UDP-N-acetyl-alpha-D-glucosamine is bound by residues Leu-7–Gly-10, Lys-21, Gln-72, Gly-77–Thr-78, Tyr-99–Asp-101, Gly-136, Glu-150, Asn-165, and Asn-223. Asp-101 is a binding site for Mg(2+). Asn-223 contacts Mg(2+). The linker stretch occupies residues Leu-226 to Ala-246. Residues Gly-247 to Lys-451 form an N-acetyltransferase region. 2 residues coordinate UDP-N-acetyl-alpha-D-glucosamine: Arg-329 and Lys-347. The active-site Proton acceptor is His-359. Residues Tyr-362 and Asn-373 each contribute to the UDP-N-acetyl-alpha-D-glucosamine site. Residues Ala-376, Asn-382 to Tyr-383, Ser-401, Ala-419, and Arg-436 contribute to the acetyl-CoA site.

This sequence in the N-terminal section; belongs to the N-acetylglucosamine-1-phosphate uridyltransferase family. It in the C-terminal section; belongs to the transferase hexapeptide repeat family. Homotrimer. Mg(2+) is required as a cofactor.

It is found in the cytoplasm. It catalyses the reaction alpha-D-glucosamine 1-phosphate + acetyl-CoA = N-acetyl-alpha-D-glucosamine 1-phosphate + CoA + H(+). The enzyme catalyses N-acetyl-alpha-D-glucosamine 1-phosphate + UTP + H(+) = UDP-N-acetyl-alpha-D-glucosamine + diphosphate. Its pathway is nucleotide-sugar biosynthesis; UDP-N-acetyl-alpha-D-glucosamine biosynthesis; N-acetyl-alpha-D-glucosamine 1-phosphate from alpha-D-glucosamine 6-phosphate (route II): step 2/2. It functions in the pathway nucleotide-sugar biosynthesis; UDP-N-acetyl-alpha-D-glucosamine biosynthesis; UDP-N-acetyl-alpha-D-glucosamine from N-acetyl-alpha-D-glucosamine 1-phosphate: step 1/1. It participates in bacterial outer membrane biogenesis; LPS lipid A biosynthesis. Its function is as follows. Catalyzes the last two sequential reactions in the de novo biosynthetic pathway for UDP-N-acetylglucosamine (UDP-GlcNAc). The C-terminal domain catalyzes the transfer of acetyl group from acetyl coenzyme A to glucosamine-1-phosphate (GlcN-1-P) to produce N-acetylglucosamine-1-phosphate (GlcNAc-1-P), which is converted into UDP-GlcNAc by the transfer of uridine 5-monophosphate (from uridine 5-triphosphate), a reaction catalyzed by the N-terminal domain. The protein is Bifunctional protein GlmU of Saccharophagus degradans (strain 2-40 / ATCC 43961 / DSM 17024).